Reading from the N-terminus, the 352-residue chain is Phosphoribosylformylglycinamidine cyclo-ligase (352 aa).

This sequence belongs to the AIR synthase family.

The protein localises to the cytoplasm. It catalyses the reaction 2-formamido-N(1)-(5-O-phospho-beta-D-ribosyl)acetamidine + ATP = 5-amino-1-(5-phospho-beta-D-ribosyl)imidazole + ADP + phosphate + H(+). The protein operates within purine metabolism; IMP biosynthesis via de novo pathway; 5-amino-1-(5-phospho-D-ribosyl)imidazole from N(2)-formyl-N(1)-(5-phospho-D-ribosyl)glycinamide: step 2/2. This is Phosphoribosylformylglycinamidine cyclo-ligase from Pseudomonas syringae pv. tomato (strain ATCC BAA-871 / DC3000).